Consider the following 303-residue polypeptide: 2-dehydropantoate 2-reductase (303 aa).

NADP(+)-binding positions include 7–12 (GCGALG), Asn-98, and Ala-122. Asn-98 contributes to the substrate binding site. Lys-176 serves as the catalytic Proton donor. Substrate-binding residues include Asn-180, Asn-184, Asn-194, and Ser-244. Position 256 (Glu-256) interacts with NADP(+).

The protein belongs to the ketopantoate reductase family. As to quaternary structure, monomer.

The protein localises to the cytoplasm. It carries out the reaction (R)-pantoate + NADP(+) = 2-dehydropantoate + NADPH + H(+). Its pathway is cofactor biosynthesis; (R)-pantothenate biosynthesis; (R)-pantoate from 3-methyl-2-oxobutanoate: step 2/2. Functionally, catalyzes the NADPH-dependent reduction of ketopantoate into pantoic acid. This Shigella flexneri protein is 2-dehydropantoate 2-reductase (panE).